A 177-amino-acid chain; its full sequence is Large ribosomal subunit protein uL6 (177 aa).

It belongs to the universal ribosomal protein uL6 family. As to quaternary structure, part of the 50S ribosomal subunit.

This protein binds to the 23S rRNA, and is important in its secondary structure. It is located near the subunit interface in the base of the L7/L12 stalk, and near the tRNA binding site of the peptidyltransferase center. This Pseudomonas fluorescens (strain Pf0-1) protein is Large ribosomal subunit protein uL6.